The sequence spans 143 residues: Large ribosomal subunit protein uL11 (143 aa).

Belongs to the universal ribosomal protein uL11 family. Part of the ribosomal stalk of the 50S ribosomal subunit. Interacts with L10 and the large rRNA to form the base of the stalk. L10 forms an elongated spine to which L12 dimers bind in a sequential fashion forming a multimeric L10(L12)X complex. In terms of processing, one or more lysine residues are methylated.

In terms of biological role, forms part of the ribosomal stalk which helps the ribosome interact with GTP-bound translation factors. This is Large ribosomal subunit protein uL11 from Albidiferax ferrireducens (strain ATCC BAA-621 / DSM 15236 / T118) (Rhodoferax ferrireducens).